The primary structure comprises 367 residues: 2-oxoisovalerate dehydrogenase subunit alpha (367 aa).

Substrate contacts are provided by residues F66, Y95, 128–131, and S144; that span reads MPEH. 94–96 contacts thiamine diphosphate; sequence YYR. Residues 144 to 146, 174 to 180, 204 to 208, and H273 contribute to the thiamine diphosphate site; these read SPI, GDGATSE, and NFYAI. 3 residues coordinate Mg(2+): D175, N204, and Y206.

It belongs to the BCKDHA family. Heterotetramer of two alpha and two beta chains. Directly associated with ODBB in the E1 complex. The cofactor is thiamine diphosphate.

It carries out the reaction N(6)-[(R)-lipoyl]-L-lysyl-[protein] + 3-methyl-2-oxobutanoate + H(+) = N(6)-[(R)-S(8)-2-methylpropanoyldihydrolipoyl]-L-lysyl-[protein] + CO2. In terms of biological role, the branched-chain alpha-keto dehydrogenase complex catalyzes the overall conversion of alpha-keto acids to acyl-CoA and CO(2). It contains multiple copies of three enzymatic components: branched-chain alpha-keto acid decarboxylase (E1), lipoamide acyltransferase (E2) and lipoamide dehydrogenase (E3). This Thermus thermophilus (strain ATCC 27634 / DSM 579 / HB8) protein is 2-oxoisovalerate dehydrogenase subunit alpha.